Consider the following 232-residue polypeptide: NAD(P)H-quinone oxidoreductase subunit K 1 (232 aa).

[4Fe-4S] cluster contacts are provided by cysteine 49, cysteine 50, cysteine 114, and cysteine 145.

The protein belongs to the complex I 20 kDa subunit family. In terms of assembly, NDH-1 can be composed of about 15 different subunits; different subcomplexes with different compositions have been identified which probably have different functions. [4Fe-4S] cluster is required as a cofactor.

It localises to the cell inner membrane. It carries out the reaction a plastoquinone + NADH + (n+1) H(+)(in) = a plastoquinol + NAD(+) + n H(+)(out). The catalysed reaction is a plastoquinone + NADPH + (n+1) H(+)(in) = a plastoquinol + NADP(+) + n H(+)(out). In terms of biological role, NDH-1 shuttles electrons from an unknown electron donor, via FMN and iron-sulfur (Fe-S) centers, to quinones in the respiratory and/or the photosynthetic chain. The immediate electron acceptor for the enzyme in this species is believed to be plastoquinone. Couples the redox reaction to proton translocation, and thus conserves the redox energy in a proton gradient. Cyanobacterial NDH-1 also plays a role in inorganic carbon-concentration. This is NAD(P)H-quinone oxidoreductase subunit K 1 from Gloeobacter violaceus (strain ATCC 29082 / PCC 7421).